Consider the following 409-residue polypeptide: Elongation factor Tu, chloroplastic (409 aa).

The region spanning lysine 10–glutamate 214 is the tr-type G domain. The tract at residues glycine 19–threonine 26 is G1. GTP is bound at residue glycine 19–threonine 26. Threonine 26 is a Mg(2+) binding site. Residues glycine 60–asparagine 64 are G2. The G3 stretch occupies residues aspartate 81 to glycine 84. Residues aspartate 81–histidine 85 and asparagine 136–aspartate 139 each bind GTP. Residues asparagine 136–aspartate 139 form a G4 region. A G5 region spans residues serine 174–leucine 176.

The protein belongs to the TRAFAC class translation factor GTPase superfamily. Classic translation factor GTPase family. EF-Tu/EF-1A subfamily.

It is found in the plastid. The protein localises to the chloroplast. It catalyses the reaction GTP + H2O = GDP + phosphate + H(+). Its function is as follows. GTP hydrolase that promotes the GTP-dependent binding of aminoacyl-tRNA to the A-site of ribosomes during protein biosynthesis. The sequence is that of Elongation factor Tu, chloroplastic (tufA) from Pleurastrum terricola (Filamentous green alga).